We begin with the raw amino-acid sequence, 163 residues long: ATP synthase subunit b 1 (163 aa).

The chain crosses the membrane as a helical span at residues 7–27; it reads PETWVAIAFVILMGLFAYLGV.

The protein belongs to the ATPase B chain family. As to quaternary structure, F-type ATPases have 2 components, F(1) - the catalytic core - and F(0) - the membrane proton channel. F(1) has five subunits: alpha(3), beta(3), gamma(1), delta(1), epsilon(1). F(0) has three main subunits: a(1), b(2) and c(10-14). The alpha and beta chains form an alternating ring which encloses part of the gamma chain. F(1) is attached to F(0) by a central stalk formed by the gamma and epsilon chains, while a peripheral stalk is formed by the delta and b chains.

It localises to the cell inner membrane. Its function is as follows. F(1)F(0) ATP synthase produces ATP from ADP in the presence of a proton or sodium gradient. F-type ATPases consist of two structural domains, F(1) containing the extramembraneous catalytic core and F(0) containing the membrane proton channel, linked together by a central stalk and a peripheral stalk. During catalysis, ATP synthesis in the catalytic domain of F(1) is coupled via a rotary mechanism of the central stalk subunits to proton translocation. Functionally, component of the F(0) channel, it forms part of the peripheral stalk, linking F(1) to F(0). This chain is ATP synthase subunit b 1, found in Bradyrhizobium sp. (strain BTAi1 / ATCC BAA-1182).